Reading from the N-terminus, the 250-residue chain is Shieldin complex subunit 3 (250 aa).

A sufficient for interaction with MAD2L2 region spans residues 28–83; that stretch reads QDFPTRPLSRFIPWFPYDGSKLPLRPKRSPPVISEEAAEDVKQYLTISEHDAKSHS. The segment covering 108-119 has biased composition (polar residues); it reads LKEQTNSGNLGK. A disordered region spans residues 108 to 129; the sequence is LKEQTNSGNLGKQSEKGKQHKR.

Component of the shieldin complex, consisting of SHLD1, SHLD2, SHLD3 and MAD2L2/REV7. Within the complex, SHLD2 forms a scaffold which interacts with a SHLD3-MAD2L2 subcomplex via its N-terminus, and with SHLD1 via its C-terminus. Interacts with ASTE1.

Its subcellular location is the chromosome. Component of the shieldin complex, which plays an important role in repair of DNA double-stranded breaks (DSBs). During G1 and S phase of the cell cycle, the complex functions downstream of TP53BP1 to promote non-homologous end joining (NHEJ) and suppress DNA end resection. Mediates various NHEJ-dependent processes including immunoglobulin class-switch recombination, and fusion of unprotected telomeres. The polypeptide is Shieldin complex subunit 3 (Homo sapiens (Human)).